Reading from the N-terminus, the 678-residue chain is Probable antibacterial peptide polyprotein (678 aa).

14 consecutive repeat copies span residues Met1–Arg67, Glu68–Arg114, Glu115–Arg161, Glu162–Arg208, Glu209–Arg255, Glu256–Arg302, Glu303–Arg349, Glu350–Arg396, Glu397–Arg443, Glu444–Arg490, Glu491–Arg537, Glu538–Arg584, Glu585–Arg631, and Glu632–Arg678. The interval Met1–Arg678 is 14 X approximate tandem repeats. A glycan (O-linked (GalNAc...) threonine) is linked at Thr32. Disordered regions lie at residues Ser58–Leu97 and Val113–Arg678. The segment covering Pro64–Val73 has biased composition (basic and acidic residues). 2 O-linked (GalNAc...) threonine glycosylation sites follow: Thr83 and Thr130. Positions Glu145–Leu157 are enriched in low complexity. Basic and acidic residues predominate over residues Pro158–Val167. Residue Thr177 is glycosylated (O-linked (GalNAc...) threonine). The segment covering Val188–Leu204 has biased composition (low complexity). The segment covering Pro205–Val214 has biased composition (basic and acidic residues). Residues Thr224 and Thr271 are each glycosylated (O-linked (GalNAc...) threonine). The span at Pro299–Val308 shows a compositional bias: basic and acidic residues. A glycan (O-linked (GalNAc...) threonine) is linked at Thr318. The span at Glu333–Leu345 shows a compositional bias: low complexity. Positions Pro346–Val355 are enriched in basic and acidic residues. Thr365 carries an O-linked (GalNAc...) threonine glycan. The segment covering Glu380–Leu392 has biased composition (low complexity). The span at Pro393–Val402 shows a compositional bias: basic and acidic residues. O-linked (GalNAc...) threonine glycosylation is present at Thr412. Over residues Glu427–Leu439 the composition is skewed to low complexity. Basic and acidic residues predominate over residues Pro440–Val449. Residue Thr459 is glycosylated (O-linked (GalNAc...) threonine). Over residues Glu474 to Leu486 the composition is skewed to low complexity. A compositionally biased stretch (basic and acidic residues) spans Pro487–Val496. An O-linked (GalNAc...) threonine glycan is attached at Thr506. Positions Glu521 to Leu533 are enriched in low complexity. Basic and acidic residues predominate over residues Pro534–Val543. Thr553 carries O-linked (GalNAc...) threonine glycosylation. Low complexity predominate over residues Glu568–Leu580. The segment covering Pro581–Val590 has biased composition (basic and acidic residues). Residue Thr600 is glycosylated (O-linked (GalNAc...) threonine). Low complexity predominate over residues Glu615–Leu627. The O-linked (GalNAc...) threonine glycan is linked to Thr647.

Its subcellular location is the secreted. In terms of biological role, has antibacterial activity in vitro. This chain is Probable antibacterial peptide polyprotein, found in Riptortus clavatus (Bean bug).